The sequence spans 192 residues: Fe/S biogenesis protein NfuA (192 aa).

C149 and C152 together coordinate [4Fe-4S] cluster.

This sequence belongs to the NfuA family. As to quaternary structure, homodimer. The cofactor is [4Fe-4S] cluster.

Its function is as follows. Involved in iron-sulfur cluster biogenesis. Binds a 4Fe-4S cluster, can transfer this cluster to apoproteins, and thereby intervenes in the maturation of Fe/S proteins. Could also act as a scaffold/chaperone for damaged Fe/S proteins. The sequence is that of Fe/S biogenesis protein NfuA from Shewanella halifaxensis (strain HAW-EB4).